A 360-amino-acid chain; its full sequence is Cyclin-dependent kinase 10 (360 aa).

A Protein kinase domain is found at 39-323 (FEKLNRIGEG…SGDCLESSYF (285 aa)). Residues 45–53 (IGEGTYGIV) and lysine 68 each bind ATP. Aspartate 163 functions as the Proton acceptor in the catalytic mechanism. Residue threonine 196 is modified to Phosphothreonine. Positions 334 to 360 (LMPTFPHHRNKRAAPAAAEGQSKRCRP) are disordered.

This sequence belongs to the protein kinase superfamily. CMGC Ser/Thr protein kinase family. CDC2/CDKX subfamily. In terms of assembly, heterodimer with CCNQ, the interaction is required for kinase activity. Interacts with ETS2. Interacts with PRK2.

The protein localises to the cytoplasm. Its subcellular location is the cytoskeleton. It localises to the cilium basal body. It catalyses the reaction L-seryl-[protein] + ATP = O-phospho-L-seryl-[protein] + ADP + H(+). The enzyme catalyses L-threonyl-[protein] + ATP = O-phospho-L-threonyl-[protein] + ADP + H(+). Functionally, cyclin-dependent kinase that phosphorylates the transcription factor ETS2 (in vitro) and positively controls its proteasomal degradation (in cells). Involved in the regulation of actin cytoskeleton organization through the phosphorylation of actin dynamics regulators such as PKN2. Is a negative regulator of ciliogenesis through phosphorylation of PKN2 and promotion of RhoA signaling. The protein is Cyclin-dependent kinase 10 (Cdk10) of Mus musculus (Mouse).